The sequence spans 222 residues: 2-amino-5-formylamino-6-ribosylaminopyrimidin-4(3H)-one 5'-monophosphate deformylase (222 aa).

Fe cation is bound by residues E29, H31, D40, and H108.

It belongs to the creatininase superfamily. FAPy deformylase family. In terms of assembly, homodimer. It depends on Fe(2+) as a cofactor. Requires Zn(2+) as cofactor.

The enzyme catalyses 2-amino-5-formylamino-6-(5-phospho-D-ribosylamino)pyrimidin-4(3H)-one + H2O = 2,5-diamino-6-(1-D-ribosylamino)pyrimidin-4(3H)-one 5'-phosphate + formate + H(+). The protein operates within cofactor biosynthesis; coenzyme F420 biosynthesis. It functions in the pathway cofactor biosynthesis; riboflavin biosynthesis. Catalyzes the hydrolysis of the formamide of 2-amino-5-formylamino-6-ribosylamino-4(3H)-pyrimidinone 5'-monophosphate (FAPy) to form 2,5-diamino-6-ribosylamino-4(3H)-pyrimidinone 5'-phosphate (APy). This chain is 2-amino-5-formylamino-6-ribosylaminopyrimidin-4(3H)-one 5'-monophosphate deformylase, found in Methanocaldococcus infernus (strain DSM 11812 / JCM 15783 / ME).